A 398-amino-acid chain; its full sequence is Ribosomal RNA large subunit methyltransferase I (398 aa).

The region spanning 2–79 (SVRLVLAKGR…LSESIDIAFF (78 aa)) is the PUA domain.

The protein belongs to the methyltransferase superfamily. RlmI family.

The protein localises to the cytoplasm. The catalysed reaction is cytidine(1962) in 23S rRNA + S-adenosyl-L-methionine = 5-methylcytidine(1962) in 23S rRNA + S-adenosyl-L-homocysteine + H(+). In terms of biological role, specifically methylates the cytosine at position 1962 (m5C1962) of 23S rRNA. This chain is Ribosomal RNA large subunit methyltransferase I, found in Shigella dysenteriae serotype 1 (strain Sd197).